The primary structure comprises 417 residues: uncharacterized protein (417 aa).

The next 9 membrane-spanning stretches (helical) occupy residues 1–21, 32–52, 96–116, 168–188, 192–212, 261–281, 286–306, 351–371, and 392–412; these read MSVLSSILGMVVLIAIAVLLS, VVGALAIQVGFAALILYVPAG, VLPIIVFFSGLISVLYYLGIM, LFAIMVGGTASIAGSVMAGYA, VPLTYLIAASFMAAPAGLLFA, IAFVGLIALINGILSGVGGWF, LTLQSIFGLIFKPLAYLIGVT, AIITFALCGFANFSSIAILIG, and VIAGTLANLMSATIAGLFIGL.

This sequence belongs to the concentrative nucleoside transporter (CNT) (TC 2.A.41) family.

Its subcellular location is the cell inner membrane. This is an uncharacterized protein from Haemophilus influenzae (strain ATCC 51907 / DSM 11121 / KW20 / Rd).